The primary structure comprises 131 residues: Small ribosomal subunit protein uS11 (131 aa).

This sequence belongs to the universal ribosomal protein uS11 family. In terms of assembly, part of the 30S ribosomal subunit.

Functionally, located on the platform of the 30S subunit. The protein is Small ribosomal subunit protein uS11 of Haloquadratum walsbyi (strain DSM 16790 / HBSQ001).